Reading from the N-terminus, the 607-residue chain is DNA mismatch repair protein MutL (607 aa).

Belongs to the DNA mismatch repair MutL/HexB family.

Functionally, this protein is involved in the repair of mismatches in DNA. It is required for dam-dependent methyl-directed DNA mismatch repair. May act as a 'molecular matchmaker', a protein that promotes the formation of a stable complex between two or more DNA-binding proteins in an ATP-dependent manner without itself being part of a final effector complex. In Anaeromyxobacter dehalogenans (strain 2CP-1 / ATCC BAA-258), this protein is DNA mismatch repair protein MutL.